Consider the following 513-residue polypeptide: ATP synthase subunit alpha 1 (513 aa).

Residue G169–T176 participates in ATP binding.

The protein belongs to the ATPase alpha/beta chains family. F-type ATPases have 2 components, CF(1) - the catalytic core - and CF(0) - the membrane proton channel. CF(1) has five subunits: alpha(3), beta(3), gamma(1), delta(1), epsilon(1). CF(0) has three main subunits: a(1), b(2) and c(9-12). The alpha and beta chains form an alternating ring which encloses part of the gamma chain. CF(1) is attached to CF(0) by a central stalk formed by the gamma and epsilon chains, while a peripheral stalk is formed by the delta and b chains.

Its subcellular location is the cell inner membrane. The catalysed reaction is ATP + H2O + 4 H(+)(in) = ADP + phosphate + 5 H(+)(out). Functionally, produces ATP from ADP in the presence of a proton gradient across the membrane. The alpha chain is a regulatory subunit. The chain is ATP synthase subunit alpha 1 from Burkholderia thailandensis (strain ATCC 700388 / DSM 13276 / CCUG 48851 / CIP 106301 / E264).